The primary structure comprises 154 residues: 6,7-dimethyl-8-ribityllumazine synthase (154 aa).

Residues Phe-22, 56–58, and 80–82 contribute to the 5-amino-6-(D-ribitylamino)uracil site; these read AFE and AVI. 85–86 contacts (2S)-2-hydroxy-3-oxobutyl phosphate; that stretch reads ET. The active-site Proton donor is the His-88. Position 113 (Phe-113) interacts with 5-amino-6-(D-ribitylamino)uracil. Arg-127 lines the (2S)-2-hydroxy-3-oxobutyl phosphate pocket.

It belongs to the DMRL synthase family.

The enzyme catalyses (2S)-2-hydroxy-3-oxobutyl phosphate + 5-amino-6-(D-ribitylamino)uracil = 6,7-dimethyl-8-(1-D-ribityl)lumazine + phosphate + 2 H2O + H(+). It functions in the pathway cofactor biosynthesis; riboflavin biosynthesis; riboflavin from 2-hydroxy-3-oxobutyl phosphate and 5-amino-6-(D-ribitylamino)uracil: step 1/2. Catalyzes the formation of 6,7-dimethyl-8-ribityllumazine by condensation of 5-amino-6-(D-ribitylamino)uracil with 3,4-dihydroxy-2-butanone 4-phosphate. This is the penultimate step in the biosynthesis of riboflavin. The chain is 6,7-dimethyl-8-ribityllumazine synthase from Thermoanaerobacter pseudethanolicus (strain ATCC 33223 / 39E) (Clostridium thermohydrosulfuricum).